Consider the following 269-residue polypeptide: Bis(5'-nucleosyl)-tetraphosphatase, symmetrical (269 aa).

This sequence belongs to the Ap4A hydrolase family.

The enzyme catalyses P(1),P(4)-bis(5'-adenosyl) tetraphosphate + H2O = 2 ADP + 2 H(+). Its function is as follows. Hydrolyzes diadenosine 5',5'''-P1,P4-tetraphosphate to yield ADP. This chain is Bis(5'-nucleosyl)-tetraphosphatase, symmetrical, found in Vibrio vulnificus (strain CMCP6).